We begin with the raw amino-acid sequence, 487 residues long: Glutamyl-tRNA(Gln) amidotransferase subunit A (487 aa).

Catalysis depends on charge relay system residues Lys-79 and Ser-158. The active-site Acyl-ester intermediate is the Ser-182.

It belongs to the amidase family. GatA subfamily. Heterotrimer of A, B and C subunits.

It catalyses the reaction L-glutamyl-tRNA(Gln) + L-glutamine + ATP + H2O = L-glutaminyl-tRNA(Gln) + L-glutamate + ADP + phosphate + H(+). Allows the formation of correctly charged Gln-tRNA(Gln) through the transamidation of misacylated Glu-tRNA(Gln) in organisms which lack glutaminyl-tRNA synthetase. The reaction takes place in the presence of glutamine and ATP through an activated gamma-phospho-Glu-tRNA(Gln). The chain is Glutamyl-tRNA(Gln) amidotransferase subunit A from Ehrlichia ruminantium (strain Gardel).